A 359-amino-acid chain; its full sequence is Cyclic AMP response element-binding protein B (359 aa).

2 disordered regions span residues 1-73 (MDNS…AQGG) and 185-238 (VRNK…FTEI). Residues 9-32 (NGNSSAASGSNDVVDVVAQQAAAA) show a composition bias toward low complexity. The segment covering 33 to 47 (VGGGGGGGGGGGGGN) has biased composition (gly residues). Over residues 48-70 (PQQQQQNPQSTTAGGPTGATNNA) the composition is skewed to low complexity. One can recognise a KID domain in the interval 198–257 (KPEPNTQHPEDSDESLSDDDSQHHRSELTRRPSYNKIFTEISGPDMSGASLPMSDGVLNS). Residues serine 209, serine 212, and serine 214 each carry the phosphoserine modification. A compositionally biased stretch (basic and acidic residues) spans 217 to 227 (DSQHHRSELTR). The 60-residue stretch at 300-359 (TRKREIRLQKNREAARECRRKKKEYIKCLENRVAVLENQNKALIEELKSLKELYCQTKND) folds into the bZIP domain. The interval 301–326 (RKREIRLQKNREAARECRRKKKEYIK) is basic motif. The segment at 328–349 (LENRVAVLENQNKALIEELKSL) is leucine-zipper.

It belongs to the bZIP family. ATF subfamily. Homodimer. As to expression, most cells of the adult brain; cell bodies, but not neuropil.

The protein localises to the nucleus. Its function is as follows. Isoform E is a PKA-dependent transcriptional activator. Isoform J is a direct antagonist of activation by isoform E in cell culture. Binds the cAMP response element (CRE) (consensus: 5'-GTGACGT[AC][AG]-3'), a sequence present in many viral and cellular promoters. Has a role in long-term memory. This Drosophila melanogaster (Fruit fly) protein is Cyclic AMP response element-binding protein B.